Here is a 185-residue protein sequence, read N- to C-terminus: Probable chorismate pyruvate-lyase 2 (185 aa).

The substrate site is built by arginine 80, leucine 118, and glutamate 170.

It belongs to the UbiC family.

The protein localises to the cytoplasm. It catalyses the reaction chorismate = 4-hydroxybenzoate + pyruvate. It functions in the pathway cofactor biosynthesis; ubiquinone biosynthesis. Functionally, removes the pyruvyl group from chorismate, with concomitant aromatization of the ring, to provide 4-hydroxybenzoate (4HB) for the ubiquinone pathway. The chain is Probable chorismate pyruvate-lyase 2 from Pseudomonas entomophila (strain L48).